A 73-amino-acid polypeptide reads, in one-letter code: MTRILLLLLTFYRYFISPLLGGNNCRFYPTCSKYAKEALNTHGGIKGLWLIFKRIIKCQPLCDGGYDPVPPTK.

It belongs to the UPF0161 family.

Its subcellular location is the cell inner membrane. Its function is as follows. Could be involved in insertion of integral membrane proteins into the membrane. The protein is Putative membrane protein insertion efficiency factor of Rickettsia bellii (strain OSU 85-389).